The sequence spans 983 residues: MISNKRKEIDTINEHHEKNNDDSDGIDNGLLTYKKFKKDFESGSTNYRELQIIAKSLGLASNGKKQLVYNRIEGYFLSKKVKNNLTNNETNRQVEKKKEQQQPQPQEKQYILTFKDVEPVEIYFWKIFRNIVIFKHIFSNFKSKQYSYYDLIGCDEILLNGKSNSMEIIIDNIKSYNHQIIRNESNIIDIINKFKKNDEKTRSFYNLLFSRYSSTSTSPSTQLPSTIQFDGNIDIWIQRMIENVNYTALDQFIKFFKIDSEVIKKAIKIHIDPSFFGNTTYDKLKIYNYLKSINSIPTSHTLLSTISINFSTLLSFDNKFKKLIKSYKRLIESTNLQEQQEQLEKQGIIKIHPNKKYYEKLNQKILELNEIQTSQFTNYQLNSTIKKLLNHTTPTSTSTSTSTSTSTYTSTSTSTSTSLKTTNLTIISTESNYSSTNNNNNNINLKEIIKKYYKSIYLFIYFTINSANKTIFRKPLLYYLYFKKERVDKMYEHVIKKWNGSNFDHKLFFQRIFKDIKIEKNEKFELISNVLNNKYVKTFKLKDLHIFFEAVFSSNDIELIDYFLKILKQQQLNQTPETTTFPVIGSLISDYCHFIDKKEILDFYFQNYRDECLLFNDQNQTWKRIQLGLIEHYEYLTGSIGNRCNFDIFRWFDSSKFLDRLNRTIAKPLLYYFDFRGTINFNFNFIFKGLIDSNTEDSKENSIIHFLSNAQLKHPLYVSPILESSFNRYKSKMLTFIKFLFNNISKESIETKLKVINLKTDNKNFEEINSEIVLTTTLTTTTTTTTTTTTGTTATATNLLSAKKGEDVGFFIIGQTESFNFTVSIRILLVCLYRLDRVDDIIYLFDKLPEVLFNPDYFSIFTKEHCLYGISSSYYLELFINYFIENLNNNTINYLYNCLCIASKKGYTQIFKNIISSDHNSKYLLKIRTKSNQSSLFSSKLLNDIVVKSINSLNFELSNLLIDFIDFSEKDKNTLKMKIIKSK.

The span at 1 to 21 (MISNKRKEIDTINEHHEKNND) shows a compositional bias: basic and acidic residues. Residues 1-26 (MISNKRKEIDTINEHHEKNNDDSDGI) form a disordered region. Residues 42–76 (SGSTNYRELQIIAKSLGLASNGKKQLVYNRIEGYF) form the SAP domain. The disordered stretch occupies residues 391 to 413 (HTTPTSTSTSTSTSTSTYTSTST). Low complexity predominate over residues 392 to 413 (TTPTSTSTSTSTSTSTYTSTST).

It belongs to the UPF0746 family.

The sequence is that of UPF0746 protein DDB_G0280809 from Dictyostelium discoideum (Social amoeba).